The sequence spans 159 residues: NADH-quinone oxidoreductase subunit B (159 aa).

Residues cysteine 37, cysteine 38, cysteine 102, and cysteine 132 each coordinate [4Fe-4S] cluster.

It belongs to the complex I 20 kDa subunit family. In terms of assembly, NDH-1 is composed of 14 different subunits. Subunits NuoB, C, D, E, F, and G constitute the peripheral sector of the complex. [4Fe-4S] cluster is required as a cofactor.

The protein resides in the cell inner membrane. The enzyme catalyses a quinone + NADH + 5 H(+)(in) = a quinol + NAD(+) + 4 H(+)(out). In terms of biological role, NDH-1 shuttles electrons from NADH, via FMN and iron-sulfur (Fe-S) centers, to quinones in the respiratory chain. Couples the redox reaction to proton translocation (for every two electrons transferred, four hydrogen ions are translocated across the cytoplasmic membrane), and thus conserves the redox energy in a proton gradient. In Paraburkholderia phymatum (strain DSM 17167 / CIP 108236 / LMG 21445 / STM815) (Burkholderia phymatum), this protein is NADH-quinone oxidoreductase subunit B.